A 397-amino-acid chain; its full sequence is Odorant receptor 22b (397 aa).

The Cytoplasmic portion of the chain corresponds to methionine 1–lysine 49. A helical membrane pass occupies residues leucine 50 to glutamate 70. Residues tyrosine 71–serine 85 are Extracellular-facing. The chain crosses the membrane as a helical span at residues serine 86–methionine 105. At glycine 106 to cysteine 143 the chain is on the cytoplasmic side. The helical transmembrane segment at tyrosine 144–methionine 164 threads the bilayer. Residues lysine 165 to arginine 194 lie on the Extracellular side of the membrane. The chain crosses the membrane as a helical span at residues glycine 195–alanine 215. Residues arginine 216–threonine 268 lie on the Cytoplasmic side of the membrane. A helical membrane pass occupies residues isoleucine 269–phenylalanine 289. Residues phenylalanine 290–threonine 295 lie on the Extracellular side of the membrane. A helical membrane pass occupies residues glycine 296–leucine 316. The Cytoplasmic segment spans residues cysteine 317 to leucine 347. Residues valine 348–isoleucine 368 form a helical membrane-spanning segment. The Extracellular segment spans residues serine 369 to glutamine 397.

It belongs to the insect chemoreceptor superfamily. Heteromeric odorant receptor channel (TC 1.A.69) family. Or2a subfamily. Interacts with Orco, via conserved C-terminal cytoplasmic loops. Complexes exist early in the endomembrane system in olfactory sensory neurons (OSNs), coupling these complexes to the conserved ciliary trafficking pathway. Expressed with Orco in 20-22 sensory neurons on the medial-proximal edge of the antenna. This expression pattern matches the distribution of the large sensilla basiconica. Expression is first seen at 60 hours APF in a subset of cells restricted to a subregion of the developing antenna. Expression continues throughout antennal development. Expressed in the ab3A neuron which responds to ethyl butyrate.

The protein resides in the cell membrane. Odorant receptor which mediates acceptance or avoidance behavior, depending on its substrates. The odorant receptor repertoire encodes a large collection of odor stimuli that vary widely in identity, intensity, and duration. Involved in the behavioral responses to esters. Complexes with Orco to form odorant-sensing units, providing sensitive and prolonged odorant signaling and calcium permeability. They are necessary and sufficient to promote functional reconstitution of odor-evoked signaling in sensory neurons that normally respond only to carbon dioxide. This is Odorant receptor 22b (Or22b) from Drosophila melanogaster (Fruit fly).